The chain runs to 630 residues: tRNA uridine 5-carboxymethylaminomethyl modification enzyme MnmG (630 aa).

Position 15-20 (15-20 (GAGHAG)) interacts with FAD. Residue 276–290 (GPRYCPSIEDKIVRF) coordinates NAD(+).

This sequence belongs to the MnmG family. In terms of assembly, homodimer. Heterotetramer of two MnmE and two MnmG subunits. FAD serves as cofactor.

Its subcellular location is the cytoplasm. Its function is as follows. NAD-binding protein involved in the addition of a carboxymethylaminomethyl (cmnm) group at the wobble position (U34) of certain tRNAs, forming tRNA-cmnm(5)s(2)U34. This is tRNA uridine 5-carboxymethylaminomethyl modification enzyme MnmG from Latilactobacillus sakei subsp. sakei (strain 23K) (Lactobacillus sakei subsp. sakei).